We begin with the raw amino-acid sequence, 471 residues long: MKIKTRFAPSPTGYLHVGGARTALYSWLFSRHLGGEFVLRIEDTDLERSTQEAIDAIMDGMNWLNLDWDEGPYFQTKRFDRYNAVIDQMLDAGTAYRCYCSKERLEALREAQMANGEKPRYDGHCRDSQCTHGADEPSVVRFRNPQEGSVIFDDKIRGPIEFSNQELDDLIIRRTDGSPTYNFCVVIDDWDMEITHVIRGEDHINNTPRQINILKALGAPVPEYAHVSMILGDDGKKLSKRHGAVGVMQYRDDGYLPEALLNYLVRLGWSHGDQEIFSIEEMTQLFTLDAVSKSASAFNTEKLQWLNHHYINSLPPEQVAVHLSWHVEQLGIDTRNGPELVEIVKLLGERCKTLKEMAESCRYFYEEFDAFDVDAAKKHLRPIARQPLEAVKVKLAAITEWTTENVHNAIQGTADELGVGMGKVGMPLRVAVTGVGQSPGMDVTVHAIGQARTLARIDKALAFISEREAQQ.

The short motif at 9 to 19 is the 'HIGH' region element; that stretch reads PSPTGYLHVGG. Cys98, Cys100, Cys125, and Asp127 together coordinate Zn(2+). The 'KMSKS' region signature appears at 237 to 241; sequence KLSKR. ATP is bound at residue Lys240.

Belongs to the class-I aminoacyl-tRNA synthetase family. Glutamate--tRNA ligase type 1 subfamily. As to quaternary structure, monomer. Zn(2+) serves as cofactor.

The protein resides in the cytoplasm. The enzyme catalyses tRNA(Glu) + L-glutamate + ATP = L-glutamyl-tRNA(Glu) + AMP + diphosphate. Functionally, catalyzes the attachment of glutamate to tRNA(Glu) in a two-step reaction: glutamate is first activated by ATP to form Glu-AMP and then transferred to the acceptor end of tRNA(Glu). The chain is Glutamate--tRNA ligase from Yersinia pseudotuberculosis serotype IB (strain PB1/+).